Consider the following 232-residue polypeptide: Peroxiredoxin (232 aa).

In terms of domain architecture, Thioredoxin spans 6-161; sequence PSIGEKFPEI…ILRLIESLQI (156 aa). Cys-48 acts as the Cysteine sulfenic acid (-SOH) intermediate in catalysis. Residue Arg-124 coordinates substrate. Cys-203 and Cys-209 are joined by a disulfide.

It belongs to the peroxiredoxin family. Prx6 subfamily. In terms of assembly, homodecamer. Pentamer of dimers that assemble into a ring structure.

It localises to the cytoplasm. It carries out the reaction a hydroperoxide + [thioredoxin]-dithiol = an alcohol + [thioredoxin]-disulfide + H2O. Functionally, thiol-specific peroxidase that catalyzes the reduction of hydrogen peroxide and organic hydroperoxides to water and alcohols, respectively. Plays a role in cell protection against oxidative stress by detoxifying peroxides. The polypeptide is Peroxiredoxin (Hyperthermus butylicus (strain DSM 5456 / JCM 9403 / PLM1-5)).